A 513-amino-acid polypeptide reads, in one-letter code: Protein CYCLOPS (513 aa).

A disordered region spans residues 327 to 435 (QIHGGTASGE…ERSRKMAEAK (109 aa)). Residues 334–347 (SGEPSQSESSAAAP) are compositionally biased toward low complexity. Positions 359 to 381 (PSNSSQTLCDSSWKQVGESTQNR) are enriched in polar residues. Basic and acidic residues predominate over residues 384 to 396 (GVREQIMDNLKDD). 2 consecutive short sequence motifs (nuclear localization signal) follow at residues 397–401 (RKRKR) and 421–424 (KKRR). Positions 447 to 513 (MQAVMKRCEN…ERLLSETGKI (67 aa)) form a coiled coil.

Belongs to the CYCLOPS family.

It is found in the nucleus. In terms of biological role, involved symbiotic signaling. Required for root infection by symbiotic rhizobia, infection thread (IT) formation, and nodule development. Required for symbiosome formation (i.e. the release of the bacteria from the ITs) and subsequent symbiosome development. Involved in arbuscular mycorrhizal (AM) symbiosis. This Pisum sativum (Garden pea) protein is Protein CYCLOPS.